The following is a 187-amino-acid chain: UPF0301 protein Sbal195_3177 (187 aa).

The protein belongs to the UPF0301 (AlgH) family.

The protein is UPF0301 protein Sbal195_3177 of Shewanella baltica (strain OS195).